A 37-amino-acid polypeptide reads, in one-letter code: Large ribosomal subunit protein bL36 (37 aa).

It belongs to the bacterial ribosomal protein bL36 family.

The chain is Large ribosomal subunit protein bL36 from Nostoc punctiforme (strain ATCC 29133 / PCC 73102).